We begin with the raw amino-acid sequence, 159 residues long: 2-C-methyl-D-erythritol 2,4-cyclodiphosphate synthase (159 aa).

Residues Asp10 and His12 each contribute to the a divalent metal cation site. 4-CDP-2-C-methyl-D-erythritol 2-phosphate contacts are provided by residues 10 to 12 (DVH) and 36 to 37 (HS). Residue His44 coordinates a divalent metal cation. Residues 58 to 60 (DIG), 63 to 67 (FPDTD), 102 to 108 (AQAPKMA), 134 to 137 (TTTE), Phe141, and Arg144 each bind 4-CDP-2-C-methyl-D-erythritol 2-phosphate.

This sequence belongs to the IspF family. Homotrimer. Requires a divalent metal cation as cofactor.

The catalysed reaction is 4-CDP-2-C-methyl-D-erythritol 2-phosphate = 2-C-methyl-D-erythritol 2,4-cyclic diphosphate + CMP. The protein operates within isoprenoid biosynthesis; isopentenyl diphosphate biosynthesis via DXP pathway; isopentenyl diphosphate from 1-deoxy-D-xylulose 5-phosphate: step 4/6. Its function is as follows. Involved in the biosynthesis of isopentenyl diphosphate (IPP) and dimethylallyl diphosphate (DMAPP), two major building blocks of isoprenoid compounds. Catalyzes the conversion of 4-diphosphocytidyl-2-C-methyl-D-erythritol 2-phosphate (CDP-ME2P) to 2-C-methyl-D-erythritol 2,4-cyclodiphosphate (ME-CPP) with a corresponding release of cytidine 5-monophosphate (CMP). The protein is 2-C-methyl-D-erythritol 2,4-cyclodiphosphate synthase of Shewanella halifaxensis (strain HAW-EB4).